Consider the following 206-residue polypeptide: Isochorismatase family protein 1B (206 aa).

Belongs to the isochorismatase family.

The protein is Isochorismatase family protein 1B of Dictyostelium discoideum (Social amoeba).